A 210-amino-acid polypeptide reads, in one-letter code: Guanylate kinase (210 aa).

The 181-residue stretch at 6-186 folds into the Guanylate kinase-like domain; the sequence is GLLGIISAPS…ALIYLQSVIL (181 aa). ATP is bound at residue 13–20; it reads APSGAGKS.

It belongs to the guanylate kinase family.

Its subcellular location is the cytoplasm. It carries out the reaction GMP + ATP = GDP + ADP. Its function is as follows. Essential for recycling GMP and indirectly, cGMP. This is Guanylate kinase from Blochmanniella floridana.